Consider the following 697-residue polypeptide: Phosphatase and actin regulator 4-B (697 aa).

The RPEL 1 repeat unit spans residues 42–67; it reads EVLERKISMRKPREELVKRGLIVDVP. 2 disordered regions span residues 63–381 and 450–569; these read IVDV…LTLA and LKVP…SKDE. The span at 189-202 shows a compositional bias: basic and acidic residues; the sequence is HVPEKTSEKYRPKS. 2 stretches are compositionally biased toward pro residues: residues 317-326 and 370-380; these read PSPPLPPKRA and APNPPVPPLTL. Acidic residues-rich tracts occupy residues 454–469, 501–514, and 522–532; these read DDDD…DESL, QEED…DTDS, and EEDEDEEEEET. RPEL repeat units follow at residues 579-604 and 616-641; these read TQLN…QKNE and RRLT…RFNE.

Belongs to the phosphatase and actin regulator family. In terms of assembly, binds ppp1ca and actin.

It is found in the cytoplasm. Its subcellular location is the cell projection. The protein localises to the lamellipodium. Functionally, regulator of protein phosphatase 1 (PP1) required for neural tube and optic fissure closure, and enteric neural crest cell (ENCCs) migration during development. Acts as an activator of PP1. During neural tube closure, localizes to the ventral neural tube and activates PP1, leading to down-regulate cell proliferation within cranial neural tissue and the neural retina. Also acts as a regulator of migration of enteric neural crest cells (ENCCs) by activating PP1, leading to repression of the integrin signaling through the rho/rock pathway. The sequence is that of Phosphatase and actin regulator 4-B (phactr4-b) from Xenopus laevis (African clawed frog).